The sequence spans 1431 residues: Zinc finger protein 687b (1431 aa).

Disordered stretches follow at residues Lys24–Lys481 and Lys504–Gly538. Residues Ser61–Ser73 show a composition bias toward low complexity. Over residues Gly103–Gly122 the composition is skewed to polar residues. Low complexity-rich tracts occupy residues Met174–Leu188, Ala196–Pro209, and Leu217–Pro248. A compositionally biased stretch (polar residues) spans Leu249–Ala267. The segment covering Ser311–Pro324 has biased composition (low complexity). A compositionally biased stretch (polar residues) spans Arg342 to Ser359. Basic and acidic residues predominate over residues Pro361 to Pro377. Low complexity predominate over residues Pro385–Ala410. The segment covering Asp438–Val449 has biased composition (basic and acidic residues). The span at Gln519–Lys528 shows a compositional bias: gly residues. The C2H2-type 1; degenerate zinc-finger motif lies at Tyr674 to His692. Residues Thr754–Pro816 are disordered. Residues Leu760–Pro775 show a composition bias toward low complexity. Polar residues predominate over residues Ala781–Ser802. The C2H2-type 2; degenerate zinc-finger motif lies at Phe830 to Arg853. C2H2-type zinc fingers lie at residues Tyr919–His942, His947–His970, Tyr982–His1004, and Phe1013–His1036. A disordered region spans residues Val1041–Met1120. A compositionally biased stretch (low complexity) spans Ala1043–Ala1057. Polar residues predominate over residues Gly1058–Leu1075. Positions Gly1080–Gln1111 are enriched in acidic residues. The segment at Trp1122–His1145 adopts a C2H2-type 7 zinc-finger fold. The C2H2-type 8; degenerate zinc finger occupies Trp1205 to Arg1227. The segment at Arg1225–Thr1310 is disordered. C2H2-type zinc fingers lie at residues Phe1307–His1329 and Gln1337–His1360. The segment at Leu1362–Asp1392 is disordered. Residues Pro1373 to Ser1384 are compositionally biased toward polar residues. A C2H2-type 11 zinc finger spans residues Val1395–His1425.

The protein belongs to the krueppel C2H2-type zinc-finger protein family. As to expression, widely expressed with highest levels in eye, spleen and ovary.

The protein localises to the nucleus. May be involved in transcriptional regulation. This chain is Zinc finger protein 687b (znf687b), found in Danio rerio (Zebrafish).